A 284-amino-acid chain; its full sequence is Trimeric intracellular cation channel type B-A (284 aa).

Residues 1 to 15 (MESLSELSVQFSQLS) are Lumenal-facing. A helical transmembrane segment spans residues 16-33 (MFPFFDMAHYVVSVMSAR). The Cytoplasmic segment spans residues 34-46 (EQAGALDIAARSP). A helical transmembrane segment spans residues 47-68 (MASWFSAMLYCFGGGILSSILL). The Lumenal segment spans residues 69-79 (AEPPIAVLSNT). A helical membrane pass occupies residues 80–99 (TNIMLASTIWYMVYYFPYDL). Residues 100-102 (FYN) are Cytoplasmic-facing. The chain crosses the membrane as a helical span at residues 103–121 (CFFFLPIRLIIAGMKEVTR). A 1,2-diacyl-sn-glycero-3-phospho-(1D-myo-inositol-4,5-bisphosphate)-binding residues include Lys-117 and Arg-121. The Lumenal segment spans residues 122 to 137 (TWKILSGVTHAHSHYK). The chain crosses the membrane as a helical span at residues 138–155 (DALLVMITIGWARGAGGG). The Cytoplasmic segment spans residues 156 to 177 (LISNFEQLVRGVWKPESNEFLK). The chain crosses the membrane as a helical span at residues 178–195 (MSYPVKVTLIGAVLFTLQ). At 196–206 (HGHYLPISRHN) the chain is on the lumenal side. A helical membrane pass occupies residues 207–224 (LMLIYTMFLVLIKVTMML). Over 225-284 (THSTASPFLPLETPLQRILFGQRQKPSEVRQSASSSGAKGKPSKKTLDKDSGEQSKKKDS) the chain is Cytoplasmic. The interval 246–284 (QRQKPSEVRQSASSSGAKGKPSKKTLDKDSGEQSKKKDS) is disordered. Over residues 269 to 284 (KTLDKDSGEQSKKKDS) the composition is skewed to basic and acidic residues.

The protein belongs to the TMEM38 family. In terms of assembly, homotrimer; conformation seems to be controled by binding to diacylglycerol (DAG).

The protein localises to the endoplasmic reticulum membrane. It carries out the reaction K(+)(in) = K(+)(out). Channel activity is activated by increased cytosolic Ca(2+) levels and blocked by luminal high Ca(2+) levels. Its function is as follows. Intracellular monovalent cation channel required for maintenance of rapid intracellular calcium release. Acts as a potassium counter-ion channel that functions in synchronization with calcium release from intracellular stores. Activated by increased cytosolic Ca(2+) levels. The polypeptide is Trimeric intracellular cation channel type B-A (tmem38b-a) (Xenopus laevis (African clawed frog)).